An 875-amino-acid polypeptide reads, in one-letter code: Kelch-like protein 29 (875 aa).

Positions 115–126 (WGQTPINQSTPW) are enriched in polar residues. Disordered regions lie at residues 115–145 (WGQTPINQSTPWDTDEPPSKQMRESDNPGTG) and 248–291 (GPTA…DSAH). Basic and acidic residues predominate over residues 131-140 (PPSKQMRESD). The region spanning 329-401 (TDLKIVVEGR…VYTGSLVIDS (73 aa)) is the BTB domain. 6 Kelch repeats span residues 585–635 (VIVL…VSAG), 637–683 (NIYL…VYDG), 684–730 (KIYT…VCGG), 732–778 (IYVF…TLNG), 779–821 (FVFI…VLDG), and 822–870 (KIYA…VIKK).

This is Kelch-like protein 29 (KLHL29) from Homo sapiens (Human).